An 881-amino-acid chain; its full sequence is Envelope glycoprotein gp160 (881 aa).

A signal peptide spans Met1–Cys22. Residues Thr23–Gly696 are Extracellular-facing. Asn37 carries an N-linked (GlcNAc...) asparagine; by host glycan. The cysteines at positions 44 and 57 are disulfide-linked. N-linked (GlcNAc...) asparagine; by host glycans are attached at residues Asn70, Asn114, Asn148, Asn158, Asn173, Asn186, Asn200, Asn204, Asn214, Asn246, Asn249, Asn280, Asn286, Asn297, Asn308, Asn318, Asn373, and Asn379. Intrachain disulfides connect Cys101–Cys222, Cys108–Cys213, Cys113–Cys170, Cys235–Cys265, and Cys245–Cys257. Residues Cys113–Ser169 are V1. Residues Cys170–Cys213 are V2. Residues Cys313–Trp345 form a V3 region. Cys313 and Cys346 are disulfide-bonded. Cystine bridges form between Cys397–Cys461 and Cys404–Cys434. Residues Cys404–Cys434 are V4. Residues Asn462 and Asn478 are each glycosylated (N-linked (GlcNAc...) asparagine; by host). Residues Gly477–Met484 are V5. Residues Gly528–Val548 are fusion peptide. The interval Leu591–Gln607 is immunosuppression. N-linked (GlcNAc...) asparagine; by host glycans are attached at residues Asn627, Asn636, and Asn652. The stretch at Asn636–Met668 forms a coiled coil. The MPER; binding to GalCer stretch occupies residues Lys673–Gln694. A helical transmembrane segment spans residues Ile697–Ala717. Residues Lys718–Leu881 lie on the Cytoplasmic side of the membrane. Residues Tyr723–Val726 carry the YXXV motif; contains endocytosis signal motif. Residues Thr737 to Asn761 are disordered. Cys789 is lipidated: S-palmitoyl cysteine; by host. The Di-leucine internalization motif motif lies at Leu880 to Leu881.

The mature envelope protein (Env) consists of a homotrimer of non-covalently associated gp120-gp41 heterodimers. The resulting complex protrudes from the virus surface as a spike. Interacts with host CD4 and CCR5. Gp120 also interacts with the C-type lectins CD209/DC-SIGN and CLEC4M/DC-SIGNR (collectively referred to as DC-SIGN(R)). As to quaternary structure, the mature envelope protein (Env) consists of a homotrimer of non-covalently associated gp120-gp41 heterodimers. The resulting complex protrudes from the virus surface as a spike. Specific enzymatic cleavages in vivo yield mature proteins. Envelope glycoproteins are synthesized as an inactive precursor that is heavily N-glycosylated and processed likely by host cell furin in the Golgi to yield the mature SU and TM proteins. The cleavage site between SU and TM requires the minimal sequence [KR]-X-[KR]-R. In terms of processing, palmitoylation of the transmembrane protein and of Env polyprotein (prior to its proteolytic cleavage) is essential for their association with host cell membrane lipid rafts. Palmitoylation is therefore required for envelope trafficking to classical lipid rafts, but not for viral replication.

The protein localises to the virion membrane. The protein resides in the host cell membrane. It is found in the host endosome membrane. Functionally, the surface protein gp120 (SU) attaches the virus to the host lymphoid cell by binding to the primary receptor CD4. This interaction induces a structural rearrangement creating a high affinity binding site for a chemokine coreceptor like CCR5. This peculiar 2 stage receptor-interaction strategy allows gp120 to maintain the highly conserved coreceptor-binding site in a cryptic conformation, protected from neutralizing antibodies. These changes are transmitted to the transmembrane protein gp41 and are thought to activate its fusogenic potential by unmasking its fusion peptide. Surface protein gp120 (SU) may target the virus to gut-associated lymphoid tissue (GALT) by binding host ITGA4/ITGB7 (alpha-4/beta-7 integrins), a complex that mediates T-cell migration to the GALT. Interaction between gp120 and ITGA4/ITGB7 would allow the virus to enter GALT early in the infection, infecting and killing most of GALT's resting CD4+ T-cells. This T-cell depletion is believed to be the major insult to the host immune system leading to AIDS. Its function is as follows. The surface protein gp120 is a ligand for CD209/DC-SIGN and CLEC4M/DC-SIGNR, which are respectively found on dendritic cells (DCs), and on endothelial cells of liver sinusoids and lymph node sinuses. These interactions allow capture of viral particles at mucosal surfaces by these cells and subsequent transmission to permissive cells. DCs are professional antigen presenting cells, critical for host immunity by inducing specific immune responses against a broad variety of pathogens. They act as sentinels in various tissues where they take up antigen, process it, and present it to T-cells following migration to lymphoid organs. SIV subverts the migration properties of dendritic cells to gain access to CD4+ T-cells in lymph nodes. Virus transmission to permissive T-cells occurs either in trans (without DCs infection, through viral capture and transmission), or in cis (following DCs productive infection, through the usual CD4-gp120 interaction), thereby inducing a robust infection. In trans infection, bound virions remain infectious over days and it is proposed that they are not degraded, but protected in non-lysosomal acidic organelles within the DCs close to the cell membrane thus contributing to the viral infectious potential during DCs' migration from the periphery to the lymphoid tissues. On arrival at lymphoid tissues, intact virions recycle back to DCs' cell surface allowing virus transmission to CD4+ T-cells. Virion capture also seems to lead to MHC-II-restricted viral antigen presentation, and probably to the activation of SIV-specific CD4+ cells. In terms of biological role, the transmembrane protein gp41 (TM) acts as a class I viral fusion protein. Under the current model, the protein has at least 3 conformational states: pre-fusion native state, pre-hairpin intermediate state, and post-fusion hairpin state. During fusion of viral and target intracellular membranes, the coiled coil regions (heptad repeats) assume a trimer-of-hairpins structure, positioning the fusion peptide in close proximity to the C-terminal region of the ectodomain. The formation of this structure appears to drive apposition and subsequent fusion of viral and target cell membranes. Complete fusion occurs in host cell endosomes. The virus undergoes clathrin-dependent internalization long before endosomal fusion, thus minimizing the surface exposure of conserved viral epitopes during fusion and reducing the efficacy of inhibitors targeting these epitopes. Membranes fusion leads to delivery of the nucleocapsid into the cytoplasm. Functionally, the envelope glycoprotein gp160 precursor down-modulates cell surface CD4 antigen by interacting with it in the endoplasmic reticulum and blocking its transport to the cell surface. The gp120-gp41 heterodimer allows rapid transcytosis of the virus through CD4 negative cells such as simple epithelial monolayers of the intestinal, rectal and endocervical epithelial barriers. Both gp120 and gp41 specifically recognize glycosphingolipids galactosyl-ceramide (GalCer) or 3' sulfo-galactosyl-ceramide (GalS) present in the lipid rafts structures of epithelial cells. Binding to these alternative receptors allows the rapid transcytosis of the virus through the epithelial cells. This transcytotic vesicle-mediated transport of virions from the apical side to the basolateral side of the epithelial cells does not involve infection of the cells themselves. The chain is Envelope glycoprotein gp160 (env) from Simian immunodeficiency virus (isolate K78) (SIV-mac).